A 385-amino-acid chain; its full sequence is Glucans biosynthesis protein C (385 aa).

Helical transmembrane passes span A17–W37, M60–L80, V91–Q111, I137–F157, K173–I193, F212–I232, L239–L259, T274–G294, A311–T331, and W338–I358.

The protein belongs to the acyltransferase 3 family. OpgC subfamily.

The protein localises to the cell membrane. It functions in the pathway glycan metabolism; osmoregulated periplasmic glucan (OPG) biosynthesis. Necessary for the succinyl substitution of periplasmic glucans. Could catalyze the transfer of succinyl residues from the cytoplasmic side of the membrane to the nascent glucan backbones on the periplasmic side of the membrane. In Escherichia coli O139:H28 (strain E24377A / ETEC), this protein is Glucans biosynthesis protein C.